A 1237-amino-acid polypeptide reads, in one-letter code: MRSRSNSGVRLDSYARLVQQTILCHQNPVTGLLPASYDQKDAWVRDNVYSILAVWGLGLAYRKNADRDEDKAKAYELEQSVVKLMRGLLHCMIRQVDKVESFKYSQSTKDSLHAKYNTKTCATVVGDDQWGHLQLDATSVYLLFLAQMTASGLHIIHSLDEVNFIQNLVFYIEAAYKTADFGIWERGDKTNQGISELNASSVGMAKAALEALDELDLFGVKGGPQSVIHVLADEVQHCQSILNSLLPRASTSKEVDASLLSVISFPAFAVEDSKLVEITKQEIITKLQGRYGCCRFLRDGYKTPKEDPNRLYYEPAELKLFENIECEWPLFWTYFILDGVFSGNAEQVQEYREALEAVLIKGKNGVPLLPELYSVPPDKVDEEYQNPHTVDRVPMGKLPHMWGQSLYILGSLMAEGFLAPGEIDPLNRRFSTVPKPDVVVQVSILAETEEIKAILKDKGINVETIAEVYPIRVQPARILSHIYSSLGCNNRMKLSGRPYRHMGVLGTSKLYDIRKTIFTFTPQFIDQQQFYLALDNKMIVEMLRTDLSYLCSRWRMTGQPTITFPISQTMLDEDGTSLNSSILAALRKMQDGYFGGARIQTGKLSEFLTTSCCTHLSFMDPGPEGKLYSEDYDDNYDELESGDWMDGYNSTSTARCGDEVARYLDHLLAHTAPHPKLAPASQKGGLNRFRAAVQTTCDLMSLVTKAKELHVQNVHMYLPTKLFQASRPSLNLLDSSHPSQEDQVPTVRVEVHLPRDQSGEVDFQALVLQLKETSSLQEQADILYMLYTMKGPDWDTELYEEGSATVRELLTELYGKVGKIRHWGLIRYISGILRKKVEALDEACTDLLSHQKHLTVGLPPEPREKTISAPLPYEALTRLIEEACEGDMNISILTQEIMVYLAMYMRTQPGLFAEMFRLRIGLIIQVMATELAHSLRCSAEEATEGLMNLSPSAMKNLLHHILSGKEFGVERSVRPTDSNVSPAISIHEIGAVGATKTERTGIMQLKSEIKQVEFRRLSISTESQPNGGHSLGADLMSPSFLSPGTSVTPSSGSFPGHHTSKDSRQGQWQRRRRLDGALNRVPIGFYQKVWKVLQKCHGLSVEGFVLPSSTTREMTPGEIKFSVHVESVLNRVPQPEYRQLLVEAILVLTMLADIEIHSIGSIIAVEKIVHIANDLFLQEQKTLGADDIMLAKDPASGICTLLYDSAPSGRFGTMTYLSKAAATYVQEFLPHSICAMQ.

A phosphoserine mark is found at Ser-629, Ser-729, Ser-735, and Ser-758. The calmodulin-binding stretch occupies residues 810–840 (LTELYGKVGKIRHWGLIRYISGILRKKVEAL). At Ser-972 the chain carries Phosphoserine; by autocatalysis. Ser-981 is subject to Phosphoserine. A phosphoserine; by autocatalysis mark is found at Ser-985 and Ser-1007. Ser-1018 carries the post-translational modification Phosphoserine; by PKA. Ser-1020, Ser-1023, and Ser-1030 each carry phosphoserine. Positions 1021 to 1069 (TESQPNGGHSLGADLMSPSFLSPGTSVTPSSGSFPGHHTSKDSRQGQWQ) are disordered. A compositionally biased stretch (low complexity) spans 1042–1056 (SPGTSVTPSSGSFPG). The segment at 1060–1100 (SKDSRQGQWQRRRRLDGALNRVPIGFYQKVWKVLQKCHGLS) is calmodulin-binding. The residue at position 1127 (Ser-1127) is a Phosphoserine. Cys-1234 carries the S-farnesyl cysteine lipid modification.

This sequence belongs to the phosphorylase b kinase regulatory chain family. In terms of assembly, hexadecamer of 4 heterotetramers, each composed of alpha, beta, gamma, and delta subunits. Alpha (PHKA1 or PHKA2) and beta (PHKB) are regulatory subunits, gamma (PHKG1 or PHKG2) is the catalytic subunit, and delta is calmodulin. Phosphorylation of Ser-1018 by PKA stimulates the dephosphorylation of the beta subunit and, thus, reverses the initial stimulation of PHK by the faster beta-subunit phosphorylation by PKA, that occurs in muscle in response to adrenaline. In terms of processing, cys-1234 is farnesylated, but the C-terminal tripeptide is not removed and the cysteine carboxyl is not methylated. As to expression, isoform 1 predominates in muscle, heart, brain and testis. Isoforms 1 and 2 are expressed in similar quantities in the other tissues. Isoform 3 is highly expressed in slow muscle and heart.

Its subcellular location is the cell membrane. It functions in the pathway glycan biosynthesis; glycogen metabolism. With respect to regulation, by phosphorylation of various serine residues and by calcium. In terms of biological role, phosphorylase b kinase catalyzes the phosphorylation of serine in certain substrates, including troponin I. The alpha chain may bind calmodulin. This Oryctolagus cuniculus (Rabbit) protein is Phosphorylase b kinase regulatory subunit alpha, skeletal muscle isoform (PHKA1).